A 520-amino-acid polypeptide reads, in one-letter code: Glucose-1-phosphate adenylyltransferase small subunit, chloroplastic (520 aa).

The transit peptide at 1 to 71 (MATMAAIGSL…RTPSIVSPKA (71 aa)) directs the protein to the chloroplast. The disordered stretch occupies residues 1–81 (MATMAAIGSL…VSDSQNSQTC (81 aa)). Low complexity predominate over residues 14 to 27 (SSSSNHTRRLSSSS). Polar residues predominate over residues 28–51 (QRKTLSFSSSSLTGEKLNPTQEII).

It belongs to the bacterial/plant glucose-1-phosphate adenylyltransferase family. As to quaternary structure, heterotetramer. As to expression, leaves.

It localises to the plastid. The protein localises to the chloroplast. The catalysed reaction is alpha-D-glucose 1-phosphate + ATP + H(+) = ADP-alpha-D-glucose + diphosphate. It functions in the pathway glycan biosynthesis; starch biosynthesis. Activated by 3'phosphoglycerate, inhibited by orthophosphate. Allosteric regulation. In terms of biological role, this protein plays a role in synthesis of starch. It catalyzes the synthesis of the activated glycosyl donor, ADP-glucose from Glc-1-P and ATP. This chain is Glucose-1-phosphate adenylyltransferase small subunit, chloroplastic (AGPS1), found in Brassica napus (Rape).